We begin with the raw amino-acid sequence, 245 residues long: Cypemycin N-terminal methyltransferase (245 aa).

The protein belongs to the methyltransferase superfamily.

The enzyme catalyses N-terminal L-alanyl-[cypemycin] + 2 S-adenosyl-L-methionine = N-terminal N,N-dimethyl-L-alanyl-[cypemycin] + 2 S-adenosyl-L-homocysteine + 3 H(+). Functionally, involved in the biosynthesis of the lanaridin cypemycin. The enzyme can methylate a variety of oligopeptides, cyclic peptides and the epsilon-amino group of lysine. This is Cypemycin N-terminal methyltransferase from Streptomyces sp.